The chain runs to 153 residues: Insulin-like growth factor 1 (153 aa).

Positions 49–77 are b; it reads GPETLCGAELVDALQFVCGPRGFYFNKPT. Cystine bridges form between Cys54–Cys96, Cys66–Cys109, and Cys95–Cys100. Residues 78–89 form a c region; that stretch reads GYGSSIRRAPQT. An a region spans residues 90–110; it reads GIVDECCFRSCDLRRLEMYCA. Positions 111 to 118 are d; that stretch reads PLKPTKSA. Residues 119–153 constitute a propeptide, e peptide; the sequence is RSIRAQRHTDMPKTQKEVHLKNTSRGSAGNKTYRM. The segment at 119 to 153 is disordered; that stretch reads RSIRAQRHTDMPKTQKEVHLKNTSRGSAGNKTYRM. Residues 125-138 show a composition bias toward basic and acidic residues; it reads RHTDMPKTQKEVHL. Polar residues predominate over residues 139 to 153; the sequence is KNTSRGSAGNKTYRM.

Belongs to the insulin family. Forms a ternary complex with IGFR1 and ITGAV:ITGB3. Forms a ternary complex with IGFR1 and ITGA6:ITGB4. Forms a ternary complex with IGFBP3 and ALS.

Its subcellular location is the secreted. The insulin-like growth factors, isolated from plasma, are structurally and functionally related to insulin but have a much higher growth-promoting activity. May be a physiological regulator of [1-14C]-2-deoxy-D-glucose (2DG) transport and glycogen synthesis in osteoblasts. Stimulates glucose transport in bone-derived osteoblastic (PyMS) cells and is effective at much lower concentrations than insulin, not only regarding glycogen and DNA synthesis but also with regard to enhancing glucose uptake. May play a role in synapse maturation. Ca(2+)-dependent exocytosis of IGF1 is required for sensory perception of smell in the olfactory bulb. Acts as a ligand for IGF1R. Binds to the alpha subunit of IGF1R, leading to the activation of the intrinsic tyrosine kinase activity which autophosphorylates tyrosine residues in the beta subunit thus initiating a cascade of down-stream signaling events leading to activation of the PI3K-AKT/PKB and the Ras-MAPK pathways. Binds to integrins ITGAV:ITGB3 and ITGA6:ITGB4. Its binding to integrins and subsequent ternary complex formation with integrins and IGFR1 are essential for IGF1 signaling. Induces the phosphorylation and activation of IGFR1, MAPK3/ERK1, MAPK1/ERK2 and AKT1. As part of the MAPK/ERK signaling pathway, acts as a negative regulator of apoptosis in cardiomyocytes via promotion of STUB1/CHIP-mediated ubiquitination and degradation of ICER-type isoforms of CREM. The protein is Insulin-like growth factor 1 of Rattus norvegicus (Rat).